The following is a 485-amino-acid chain: tRNA sulfurtransferase (485 aa).

Positions 63–167 (DKLVERLSCM…NELLYLVTAI (105 aa)) constitute a THUMP domain. ATP contacts are provided by residues 185-186 (LI), Lys-267, Gly-289, and Gln-298. Cys-346 and Cys-458 form a disulfide bridge. The region spanning 406-485 (LAENEVILDI…FNNIKVYRQN (80 aa)) is the Rhodanese domain. Catalysis depends on Cys-458, which acts as the Cysteine persulfide intermediate.

Belongs to the ThiI family.

The protein localises to the cytoplasm. It carries out the reaction [ThiI sulfur-carrier protein]-S-sulfanyl-L-cysteine + a uridine in tRNA + 2 reduced [2Fe-2S]-[ferredoxin] + ATP + H(+) = [ThiI sulfur-carrier protein]-L-cysteine + a 4-thiouridine in tRNA + 2 oxidized [2Fe-2S]-[ferredoxin] + AMP + diphosphate. It catalyses the reaction [ThiS sulfur-carrier protein]-C-terminal Gly-Gly-AMP + S-sulfanyl-L-cysteinyl-[cysteine desulfurase] + AH2 = [ThiS sulfur-carrier protein]-C-terminal-Gly-aminoethanethioate + L-cysteinyl-[cysteine desulfurase] + A + AMP + 2 H(+). Its pathway is cofactor biosynthesis; thiamine diphosphate biosynthesis. Catalyzes the ATP-dependent transfer of a sulfur to tRNA to produce 4-thiouridine in position 8 of tRNAs, which functions as a near-UV photosensor. Also catalyzes the transfer of sulfur to the sulfur carrier protein ThiS, forming ThiS-thiocarboxylate. This is a step in the synthesis of thiazole, in the thiamine biosynthesis pathway. The sulfur is donated as persulfide by IscS. In Tolumonas auensis (strain DSM 9187 / NBRC 110442 / TA 4), this protein is tRNA sulfurtransferase.